The chain runs to 85 residues: UPF0291 protein SpyM3_1470 (85 aa).

The interval 62–85 (TPEKLRQVQREKGLHGRSLDDPKS) is disordered.

It belongs to the UPF0291 family.

The protein localises to the cytoplasm. This is UPF0291 protein SpyM3_1470 from Streptococcus pyogenes serotype M3 (strain ATCC BAA-595 / MGAS315).